We begin with the raw amino-acid sequence, 105 residues long: uncharacterized protein (105 aa).

Residues 8 to 28 (FMTAGIIIALIIAVLAPFLAS) traverse the membrane as a helical segment. The tract at residues 32-53 (DGLESTAEKVMPNPETEPVLES) is disordered. A helical transmembrane segment spans residues 72–92 (VSMVIGTILVLAIAYGVGAVF).

The protein to M.jannaschii MJ1570.

The protein resides in the cell membrane. This is an uncharacterized protein from Methanothermobacter thermautotrophicus (strain ATCC 29096 / DSM 1053 / JCM 10044 / NBRC 100330 / Delta H) (Methanobacterium thermoautotrophicum).